A 50-amino-acid polypeptide reads, in one-letter code: Ornatin-E (50 aa).

Residues R42 to D44 carry the Cell attachment site motif.

It belongs to the ornatin family.

Its subcellular location is the secreted. Potent inhibitor of fibrinogen interaction with platelet receptors expressed on glycoprotein IIb-IIIa complex. May prevent blood from clotting during either feeding and/or storage of ingested blood. The sequence is that of Ornatin-E from Placobdella ornata (Turtle leech).